A 1282-amino-acid polypeptide reads, in one-letter code: Clustered mitochondria protein homolog (1282 aa).

Residues 1–43 (MEQNNGTTEHPKEVLDQTNPSNEVTGVPNGNHAEGEGDQNAGE) are disordered. Residues 341–585 (DITRPQENYL…RITPLDVLWY (245 aa)) enclose the Clu domain. 2 stretches are compositionally biased toward basic and acidic residues: residues 631 to 641 (EAEEKAEESKP) and 653 to 669 (ESEK…RVDI). Disordered stretches follow at residues 631–669 (EAEE…RVDI) and 892–936 (RSQL…PAPA). The span at 924 to 936 (QASPRPAQSPAPA) shows a compositional bias: low complexity. A TPR repeat occupies 1003 to 1036 (AKLYHQLSMLYYQSDDKDAAVELARKAVIVTERT). A disordered region spans residues 1202 to 1282 (ANLPTRLGTK…SKQSTVKPSS (81 aa)). The segment covering 1212–1223 (PQPQVGQTTSEM) has biased composition (polar residues). Positions 1257-1272 (TKQKKRAAARNPKLRG) are enriched in basic residues. The span at 1273–1282 (SKQSTVKPSS) shows a compositional bias: polar residues.

It belongs to the CLU family. In terms of assembly, may associate with the eukaryotic translation initiation factor 3 (eIF-3) complex.

The protein resides in the cytoplasm. MRNA-binding protein involved in proper cytoplasmic distribution of mitochondria. This chain is Clustered mitochondria protein homolog, found in Coccidioides immitis (strain RS) (Valley fever fungus).